We begin with the raw amino-acid sequence, 87 residues long: MKFATCFLVSYVLVFLVLSVCKEVEAKELCNRIEDIDGNCDFEGEKGCLKFMTNKYKKERHVSCTCTNLYMLHKTKRFCDCKHRCSG.

The N-terminal stretch at 1–26 (MKFATCFLVSYVLVFLVLSVCKEVEA) is a signal peptide. 4 disulfides stabilise this stretch: Cys30–Cys85, Cys40–Cys66, Cys48–Cys79, and Cys64–Cys81.

It belongs to the DEFL family.

The protein resides in the secreted. The sequence is that of Putative defensin-like protein 231 (SCRL25) from Arabidopsis thaliana (Mouse-ear cress).